Here is an 88-residue protein sequence, read N- to C-terminus: MTADRNMRRTVVGRVVSDKMDKTIVVLVETYKTHPLYGKRMKFSKKFKAHDENNTAKVGDIVEIMETRPLSKDKRFRLVRIVEEAVIV.

The protein belongs to the universal ribosomal protein uS17 family. In terms of assembly, part of the 30S ribosomal subunit.

One of the primary rRNA binding proteins, it binds specifically to the 5'-end of 16S ribosomal RNA. In Brevibacillus brevis (strain 47 / JCM 6285 / NBRC 100599), this protein is Small ribosomal subunit protein uS17.